Consider the following 663-residue polypeptide: Protein KINESIN LIGHT CHAIN-RELATED 2 (663 aa).

A compositionally biased stretch (basic and acidic residues) spans 1–14; it reads MDVGESNERVKDDS. 2 disordered regions span residues 1 to 24 and 86 to 146; these read MDVG…RSPL and GESK…KVSV. A Phosphoserine modification is found at serine 19. Basic and acidic residues predominate over residues 86–100; that stretch reads GESKKEIILEKKEES. The segment covering 102–111 has biased composition (polar residues); sequence GEGSLSQKKP. 11 TPR repeats span residues 147 to 181, 200 to 233, 243 to 276, 285 to 318, 329 to 363, 369 to 402, 411 to 444, 454 to 487, 495 to 528, 537 to 570, and 579 to 612; these read DEES…ALRA, VMSL…PMIE, FAGC…QRQV, GETC…HKEN, AADR…SSQN, AAVD…FKQG, ALVY…YLKP, ATGF…YANA, AGIE…FRNS, GIAL…LEKE, and LAVY…REEK.

The protein belongs to the kinesin light chain family.

This chain is Protein KINESIN LIGHT CHAIN-RELATED 2, found in Arabidopsis thaliana (Mouse-ear cress).